The chain runs to 129 residues: Histone H2A-IV (129 aa).

The interval 1 to 22 is disordered; it reads MSGRGKQGGKARAKAKSRSSRA. At S2 the chain carries N-acetylserine. Phosphoserine is present on S2. K6 carries the N6-(2-hydroxyisobutyryl)lysine modification. Residues K6 and K10 each carry the N6-acetyllysine modification. Residues 7 to 19 are compositionally biased toward basic residues; the sequence is QGGKARAKAKSRS. K10 is subject to N6-(2-hydroxyisobutyryl)lysine; alternate. K10 bears the N6-lactoyllysine; alternate mark. K10 bears the N6-succinyllysine mark. Residues K14 and K16 each participate in a glycyl lysine isopeptide (Lys-Gly) (interchain with G-Cter in ubiquitin) cross-link. N6-(2-hydroxyisobutyryl)lysine; alternate is present on K37. N6-(2-hydroxyisobutyryl)lysine occurs at positions 75 and 76. Position 96 is an N6-(2-hydroxyisobutyryl)lysine; alternate (K96). K96 is subject to N6-succinyllysine. K96 carries the post-translational modification N6-glutaryllysine; alternate. An N6-glutaryllysine modification is found at K100. The residue at position 105 (Q105) is an N5-methylglutamine. K119 carries the post-translational modification N6-(2-hydroxyisobutyryl)lysine; alternate. Residues K119 and K120 each carry the N6-glutaryllysine; alternate modification. K120 participates in a covalent cross-link: Glycyl lysine isopeptide (Lys-Gly) (interchain with G-Cter in ubiquitin).

It belongs to the histone H2A family. As to quaternary structure, the nucleosome is a histone octamer containing two molecules each of H2A, H2B, H3 and H4 assembled in one H3-H4 heterotetramer and two H2A-H2B heterodimers. The octamer wraps approximately 147 bp of DNA. Post-translationally, monoubiquitination of Lys-120 (H2AK119Ub) gives a specific tag for epigenetic transcriptional repression. Following DNA double-strand breaks (DSBs), it is ubiquitinated through 'Lys-63' linkage of ubiquitin moieties, leading to the recruitment of repair proteins to sites of DNA damage. H2AK119Ub and ionizing radiation-induced 'Lys-63'-linked ubiquitination are distinct events. Phosphorylation on Ser-2 is enhanced during mitosis. Phosphorylation on Ser-2 directly represses transcription. In terms of processing, glutamine methylation at Gln-105 (H2AQ104me) by FBL is specifically dedicated to polymerase I. It is present at 35S ribosomal DNA locus and impairs binding of the FACT complex.

It localises to the nucleus. It is found in the chromosome. In terms of biological role, core component of nucleosome. Nucleosomes wrap and compact DNA into chromatin, limiting DNA accessibility to the cellular machineries which require DNA as a template. Histones thereby play a central role in transcription regulation, DNA repair, DNA replication and chromosomal stability. DNA accessibility is regulated via a complex set of post-translational modifications of histones, also called histone code, and nucleosome remodeling. In Gallus gallus (Chicken), this protein is Histone H2A-IV.